The primary structure comprises 57 residues: Light-harvesting protein B-808/866 alpha chain (57 aa).

The residue at position 1 (M1) is an N-formylmethionine. Residues 1 to 10 (MQPRSPVRTN) lie on the Cytoplasmic side of the membrane. The helical transmembrane segment at 11-30 (IVIFTILGFVVALLIHFIVL) threads the bilayer. H26 is a binding site for a bacteriochlorophyll. Topologically, residues 31–57 (SSPEYNWLSNAEGGALLLSAARALFGI) are periplasmic.

The protein belongs to the antenna complex alpha subunit family. The core complex is formed by different alpha and beta chains, binding bacteriochlorophyll molecules, and arranged most probably in tetrameric structures disposed around the reaction center. The non-pigmented gamma chains may constitute additional components.

It is found in the cell membrane. In terms of biological role, antenna complexes are light-harvesting systems, which transfer the excitation energy to the reaction centers. The protein is Light-harvesting protein B-808/866 alpha chain (puf2A) of Chloroflexus aurantiacus (strain ATCC 29366 / DSM 635 / J-10-fl).